The following is a 39-amino-acid chain: Omega-theraphotoxin-Ba1b (39 aa).

3 disulfide bridges follow: cysteine 4–cysteine 17, cysteine 8–cysteine 31, and cysteine 25–cysteine 36.

The protein belongs to the neurotoxin 12 (Hwtx-2) family. 06 (TXP1) subfamily. Expressed by the venom gland.

It localises to the secreted. Inhibits voltage-gated calcium channels (Cav) in rat cerebellar granule cells. Has insecticidal activity to crickets (Acheta domesticus). Is not toxic to mice. This is Omega-theraphotoxin-Ba1b from Brachypelma albiceps (Mexican golden redrump tarantula).